We begin with the raw amino-acid sequence, 147 residues long: Hemoglobin subunit gamma (147 aa).

In terms of domain architecture, Globin spans 3–147 (NFTAEDKAAI…VASALGSRYH (145 aa)). Heme b is bound by residues H64 and H93.

This sequence belongs to the globin family. As to quaternary structure, heterotetramer of two alpha chains and two gamma chains in fetal hemoglobin (Hb F). Red blood cells.

Its function is as follows. Gamma chains make up the fetal hemoglobin F, in combination with alpha chains. The polypeptide is Hemoglobin subunit gamma (HBG) (Aotus azarae (Azara's night monkey)).